The primary structure comprises 344 residues: L-threonine 3-dehydrogenase (344 aa).

Cys-42 is a Zn(2+) binding site. Active-site charge relay system residues include Thr-44 and His-47. Residues His-67, Glu-68, Cys-97, Cys-100, Cys-103, and Cys-111 each contribute to the Zn(2+) site. NAD(+) contacts are provided by residues Ile-179, Asp-199, Arg-204, 266 to 268, and 290 to 291; these read LGI and IY.

This sequence belongs to the zinc-containing alcohol dehydrogenase family. In terms of assembly, homotetramer. It depends on Zn(2+) as a cofactor.

It localises to the cytoplasm. It carries out the reaction L-threonine + NAD(+) = (2S)-2-amino-3-oxobutanoate + NADH + H(+). Its pathway is amino-acid degradation; L-threonine degradation via oxydo-reductase pathway; glycine from L-threonine: step 1/2. Its function is as follows. Catalyzes the NAD(+)-dependent oxidation of L-threonine to 2-amino-3-ketobutyrate. In Sinorhizobium medicae (strain WSM419) (Ensifer medicae), this protein is L-threonine 3-dehydrogenase.